The sequence spans 164 residues: Putative 4-hydroxy-4-methyl-2-oxoglutarate aldolase (164 aa).

Substrate is bound by residues 80 to 83 (GGNL) and Arg102. Asp103 is a binding site for a divalent metal cation.

Belongs to the class II aldolase/RraA-like family. Homotrimer. The cofactor is a divalent metal cation.

It carries out the reaction 4-hydroxy-4-methyl-2-oxoglutarate = 2 pyruvate. The catalysed reaction is oxaloacetate + H(+) = pyruvate + CO2. Its function is as follows. Catalyzes the aldol cleavage of 4-hydroxy-4-methyl-2-oxoglutarate (HMG) into 2 molecules of pyruvate. Also contains a secondary oxaloacetate (OAA) decarboxylase activity due to the common pyruvate enolate transition state formed following C-C bond cleavage in the retro-aldol and decarboxylation reactions. The protein is Putative 4-hydroxy-4-methyl-2-oxoglutarate aldolase of Burkholderia multivorans (strain ATCC 17616 / 249).